Reading from the N-terminus, the 214-residue chain is Thymidylate kinase (214 aa).

An ATP-binding site is contributed by 13–20 (GPDACGKS).

The protein belongs to the thymidylate kinase family.

It carries out the reaction dTMP + ATP = dTDP + ADP. Phosphorylation of dTMP to form dTDP in both de novo and salvage pathways of dTTP synthesis. The chain is Thymidylate kinase from Malacoplasma penetrans (strain HF-2) (Mycoplasma penetrans).